A 407-amino-acid polypeptide reads, in one-letter code: RING finger protein 44 (407 aa).

Positions leucine 26–leucine 58 are disordered. Residues cysteine 355 to arginine 396 form an RING-type; atypical zinc finger.

This Mus musculus (Mouse) protein is RING finger protein 44 (Rnf44).